We begin with the raw amino-acid sequence, 179 residues long: uncharacterized protein (179 aa).

The stretch at 139-172 (IEDLGKYIKSDRIEKEALREELEKILNTLVKHLE) forms a coiled coil.

This is an uncharacterized protein from Methanocaldococcus jannaschii (strain ATCC 43067 / DSM 2661 / JAL-1 / JCM 10045 / NBRC 100440) (Methanococcus jannaschii).